A 430-amino-acid chain; its full sequence is Serine hydroxymethyltransferase (430 aa).

Residues Leu-126 and 130 to 132 (GHL) each bind (6S)-5,6,7,8-tetrahydrofolate. Lys-235 carries the post-translational modification N6-(pyridoxal phosphate)lysine.

This sequence belongs to the SHMT family. Homodimer. Pyridoxal 5'-phosphate serves as cofactor.

It localises to the cytoplasm. The catalysed reaction is (6R)-5,10-methylene-5,6,7,8-tetrahydrofolate + glycine + H2O = (6S)-5,6,7,8-tetrahydrofolate + L-serine. It functions in the pathway one-carbon metabolism; tetrahydrofolate interconversion. Its pathway is amino-acid biosynthesis; glycine biosynthesis; glycine from L-serine: step 1/1. Functionally, catalyzes the reversible interconversion of serine and glycine with tetrahydrofolate (THF) serving as the one-carbon carrier. This reaction serves as the major source of one-carbon groups required for the biosynthesis of purines, thymidylate, methionine, and other important biomolecules. Also exhibits THF-independent aldolase activity toward beta-hydroxyamino acids, producing glycine and aldehydes, via a retro-aldol mechanism. In Leifsonia xyli subsp. xyli (strain CTCB07), this protein is Serine hydroxymethyltransferase.